The primary structure comprises 210 residues: Thioredoxin-like 3-1, chloroplastic (210 aa).

In terms of domain architecture, Thioredoxin spans 81–210; sequence WRLKAFWSNI…EVRELINKFV (130 aa). Catalysis depends on nucleophile residues cysteine 130 and cysteine 133. An intrachain disulfide couples cysteine 130 to cysteine 133.

Belongs to the thioredoxin family.

The protein localises to the plastid. It is found in the chloroplast stroma. Its function is as follows. Probable thiol-disulfide oxidoreductase that may participate in various redox reactions. This chain is Thioredoxin-like 3-1, chloroplastic (WCRKC1), found in Arabidopsis thaliana (Mouse-ear cress).